Consider the following 628-residue polypeptide: Kelch-like protein diablo (628 aa).

Positions 1–56 (MGDLPGSTGGGSGPAAAGNASGNASSAGNTGLGVAGTTGVDRPPSPARLSHTSEKH) are disordered. Residues 14 to 29 (PAAAGNASGNASSAGN) are compositionally biased toward low complexity. In terms of domain architecture, BTB spans 74–141 (CDVVLNVGGR…CYTAHIIVEE (68 aa)). One can recognise a BACK domain in the interval 176 to 278 (CLGIRAFADT…SPKFLVGTVG (103 aa)). 6 Kelch repeats span residues 325-371 (VLFA…VLND), 373-419 (LYAV…VLDG), 420-466 (FLYA…VLGG), 468-513 (LYAI…VFNN), 515-560 (IYAV…VVNG), and 561-607 (QLYA…VMRA).

Its pathway is protein modification; protein ubiquitination. Its function is as follows. Probable substrate-specific adapter of an E3 ubiquitin-protein ligase complex which mediates the ubiquitination and subsequent proteasomal degradation of target proteins. May have a role in synapse differentiation and growth. This is Kelch-like protein diablo from Drosophila pseudoobscura pseudoobscura (Fruit fly).